Consider the following 168-residue polypeptide: Small ribosomal subunit protein uS5 (168 aa).

Residues 13–76 (LAEKLIAVNR…EKARRNMINV (64 aa)) enclose the S5 DRBM domain.

This sequence belongs to the universal ribosomal protein uS5 family. Part of the 30S ribosomal subunit. Contacts proteins S4 and S8.

Its function is as follows. With S4 and S12 plays an important role in translational accuracy. In terms of biological role, located at the back of the 30S subunit body where it stabilizes the conformation of the head with respect to the body. The chain is Small ribosomal subunit protein uS5 from Pseudoalteromonas translucida (strain TAC 125).